Consider the following 651-residue polypeptide: MRRFFICYIGFLSIFLDFILADKDNNSEEERDRKFDWKFENENGKPEHETVTVPKLPDGSYFWKWTWNSRINSTTAATPTSTVTTSTSAPTTSPRVYKLKSEARKSLRKALRGVPPEKRKKQLKKMGKKMMKIPKITKKESNKLHKSYRKVKITENPPALDMFEVNERAGLNEYLFQGDINLNNNQIAKISSEQSSKSRRKKRQIDNLAQFWPGKVVYYYFDSGLTTTVQQIVRDAITFLESNTCLKFELNSTATNRIFSGVGCYSDTGMLGGEQTLSLGYGCEVTGTAAHEIAHTLGLFHTQMRSDRDDYVTIDLTDVPESSQQNFIKLTEATSTNLVDYEYGSFMHYSGRAFVSSGGVDSIVPKDPVMVYTMGGRIVTFLDLKMLNTHYSCSCPTILSCGNGGFTNPANCSVCICPYGFGGALCTERTDYGCGSTLTATDTWQQETYTFGNASNSATARPSAVYCNHWIQAPVGKQIQFRIDSTYNTQCVYGCTFNGVEPKLKSDMTITQARYCCDEFNAEIMTADFGVNPMPVFSFNRYYKTTYTWSYRYVDSNVTACADTSDKATCLSLKSAKEQGCSIYDTAQLKVMCAATMDLCGKVASDDGTCKDRFPKSQCSTYSTNGMCTQQPPLAAEFSCAETCGFCTNPV.

Residues 1–21 form the signal peptide; the sequence is MRRFFICYIGFLSIFLDFILA. Positions 22 to 202 are excised as a propeptide; that stretch reads DKDNNSEEER…EQSSKSRRKK (181 aa). 3 N-linked (GlcNAc...) asparagine glycosylation sites follow: Asn-25, Asn-72, and Asn-251. In terms of domain architecture, Peptidase M12A spans 203–394; that stretch reads RQIDNLAQFW…KMLNTHYSCS (192 aa). Cystine bridges form between Cys-245-Cys-393, Cys-264-Cys-283, Cys-395-Cys-412, Cys-415-Cys-426, Cys-434-Cys-467, and Cys-495-Cys-516. His-291 lines the Zn(2+) pocket. Glu-292 is a catalytic residue. Zn(2+)-binding residues include His-295 and His-301. Residues 380-433 enclose the EGF-like domain; that stretch reads TFLDLKMLNTHYSCSCPTILSCGNGGFTNPANCSVCICPYGFGGALCTERTDYG. An N-linked (GlcNAc...) asparagine glycan is attached at Asn-411. In terms of domain architecture, CUB spans 434-554; the sequence is CGSTLTATDT…TTYTWSYRYV (121 aa). Residue Asn-453 is glycosylated (N-linked (GlcNAc...) asparagine). Asn-557 carries N-linked (GlcNAc...) asparagine glycosylation. 3 disulfide bridges follow: Cys-610–Cys-647, Cys-619–Cys-640, and Cys-628–Cys-644. Positions 610 to 647 constitute a ShKT domain; that stretch reads CKDRFPKSQCSTYSTNGMCTQQPPLAAEFSCAETCGFC.

Zn(2+) is required as a cofactor. In terms of tissue distribution, expressed in pharyngeal, anal depressor, intestinal and vulva muscles, head neurons and head mesodermal cell.

The protein resides in the secreted. Functionally, metalloprotease. The chain is Zinc metalloproteinase nas-32 (nas-32) from Caenorhabditis elegans.